A 330-amino-acid chain; its full sequence is Phosphate acyltransferase (330 aa).

The protein belongs to the PlsX family. Homodimer. Probably interacts with PlsY.

It is found in the cytoplasm. It catalyses the reaction a fatty acyl-[ACP] + phosphate = an acyl phosphate + holo-[ACP]. It functions in the pathway lipid metabolism; phospholipid metabolism. In terms of biological role, catalyzes the reversible formation of acyl-phosphate (acyl-PO(4)) from acyl-[acyl-carrier-protein] (acyl-ACP). This enzyme utilizes acyl-ACP as fatty acyl donor, but not acyl-CoA. The chain is Phosphate acyltransferase from Streptococcus agalactiae serotype Ia (strain ATCC 27591 / A909 / CDC SS700).